The chain runs to 104 residues: Vacuolar ATPase assembly integral membrane protein VMA21 (104 aa).

The Cytoplasmic segment spans residues 1 to 21 (MSNRVSTGKMAMAPQESVQPA). Residues 22–42 (VLYKLVLFALLMAVVPIGTYF) traverse the membrane as a helical segment. At 43-65 (STLNYLWDGASRCGFPSGLCSTT) the chain is on the lumenal side. Residues 66-86 (FAAISAIAAANLILVGYVVVA) form a helical membrane-spanning segment. Over 87-104 (FREDAASRTGPLPEKKTS) the chain is Cytoplasmic. The Prevents secretion from ER motif lies at 101–104 (KKTS).

Belongs to the VMA21 family.

The protein localises to the endoplasmic reticulum membrane. It localises to the endoplasmic reticulum-Golgi intermediate compartment membrane. It is found in the cytoplasmic vesicle. Its subcellular location is the COPII-coated vesicle membrane. Functionally, required for the assembly of the V0 complex of the vacuolar ATPase (V-ATPase) in the endoplasmic reticulum. The protein is Vacuolar ATPase assembly integral membrane protein VMA21 of Cryptococcus neoformans var. neoformans serotype D (strain B-3501A) (Filobasidiella neoformans).